A 410-amino-acid polypeptide reads, in one-letter code: Tryptophan synthase beta chain (410 aa).

Lysine 104 is subject to N6-(pyridoxal phosphate)lysine.

This sequence belongs to the TrpB family. As to quaternary structure, tetramer of two alpha and two beta chains. It depends on pyridoxal 5'-phosphate as a cofactor.

It catalyses the reaction (1S,2R)-1-C-(indol-3-yl)glycerol 3-phosphate + L-serine = D-glyceraldehyde 3-phosphate + L-tryptophan + H2O. Its pathway is amino-acid biosynthesis; L-tryptophan biosynthesis; L-tryptophan from chorismate: step 5/5. In terms of biological role, the beta subunit is responsible for the synthesis of L-tryptophan from indole and L-serine. The chain is Tryptophan synthase beta chain from Thermosynechococcus vestitus (strain NIES-2133 / IAM M-273 / BP-1).